The sequence spans 71 residues: Small ribosomal subunit protein bS21 (71 aa).

It belongs to the bacterial ribosomal protein bS21 family.

The sequence is that of Small ribosomal subunit protein bS21 from Blochmanniella floridana.